We begin with the raw amino-acid sequence, 1381 residues long: Serine-aspartate repeat-containing protein D (1381 aa).

A signal peptide spans 1 to 35 (MLNRENKTAITRKGMVSNRLNKFSIRKYTVGTASI). The YSIRK-G/S signaling motif signature appears at 23 to 34 (FSIRKYTVGTAS). The tract at residues 36–568 (LVGTTLIFGL…NNQSGGAGQE (533 aa)) is ligand binding A region. Residues 54–185 (ESTNKELNEA…NKKVDAKTES (132 aa)) are disordered. Polar residues-rich tracts occupy residues 62-71 (EATTSASDNQ) and 94-108 (EMVS…SNGN). Positions 130–145 (KSDEQASPKSTNEDLN) are enriched in basic and acidic residues. Composition is skewed to polar residues over residues 146–155 (TKQTISNQEA) and 163–173 (NKSVVNVQPTN). Residues 174–183 (EENKKVDAKT) are compositionally biased toward basic and acidic residues. 5 CNA-B domains span residues 569-680 (VYKI…IYKP), 681-791 (KYNL…YKTP), 792-901 (KYNL…FYKP), 902-1012 (TYNL…YKTP), and 1013-1123 (KYSL…EEET). Disordered regions lie at residues 857 to 883 (ETPS…TSTT), 972 to 992 (YTPT…GLTT), and 1078 to 1357 (EKPA…SNNA). Polar residues-rich tracts occupy residues 860 to 869 (SGYTPTQVGS) and 972 to 981 (YTPTSVTSGN). Acidic residues-rich tracts occupy residues 1091–1101 (TEDDKDADGGE), 1118–1134 (YYEE…DSDS), 1142–1164 (SDSD…DSDS), and 1172–1320 (SDSD…DSDS). Positions 1344 to 1348 (LPETG) match the LPXTG sorting signal motif. A Pentaglycyl murein peptidoglycan amidated threonine modification is found at Thr-1347. The propeptide at 1348–1381 (GNENSGSNNATLFGGLFAALGSLLLFGRRKKQNK) is removed by sortase.

It belongs to the serine-aspartate repeat-containing protein (SDr) family. As to quaternary structure, interacts with host DSG1; this interaction increases S.aureus adherence to keratinocytes.

The protein resides in the secreted. It localises to the cell wall. In terms of biological role, cell surface-associated calcium-binding protein which plays an important role in adhesion and pathogenesis. Mediates interactions with components of the extracellular matrix such as host DSG1 to promote bacterial adhesion to host cells. Contributes to the resistance to killing by innate immune components such as neutrophils present in blood and thus attenuates bacterial clearance. This Staphylococcus aureus (strain USA300) protein is Serine-aspartate repeat-containing protein D (sdrD).